The sequence spans 313 residues: Porphobilinogen deaminase (313 aa).

S-(dipyrrolylmethanemethyl)cysteine is present on Cys-242.

Belongs to the HMBS family. In terms of assembly, monomer. It depends on dipyrromethane as a cofactor.

It catalyses the reaction 4 porphobilinogen + H2O = hydroxymethylbilane + 4 NH4(+). It participates in porphyrin-containing compound metabolism; protoporphyrin-IX biosynthesis; coproporphyrinogen-III from 5-aminolevulinate: step 2/4. Functionally, tetrapolymerization of the monopyrrole PBG into the hydroxymethylbilane pre-uroporphyrinogen in several discrete steps. The chain is Porphobilinogen deaminase from Yersinia pestis bv. Antiqua (strain Angola).